The following is a 22-amino-acid chain: Cysteine protease inhibitor 4 (22 aa).

This sequence belongs to the protease inhibitor I3 (leguminous Kunitz-type inhibitor) family. Tubers.

It localises to the vacuole. Inhibitor of papain (cysteine protease). Does not inhibit trypsin, chymotrypsin nor elastase (serine proteases). May protect the plant by inhibiting proteases of invading organisms. The protein is Cysteine protease inhibitor 4 of Solanum tuberosum (Potato).